The chain runs to 138 residues: MRTFWIVAVLLVGVEGNLLQFNKMIKIMTKKNAIPFYTSYGCYCGWGGRGRPKDATDRCCFVHDCCYEKLTDCSPKTARYSYSWKSGVIICGEGTPCEKQICECDRAAAVCFGANLSTYKKRYMFYPDLLCTDPSEKC.

The signal sequence occupies residues 1 to 16; it reads MRTFWIVAVLLVGVEG. Intrachain disulfides connect Cys42/Cys131, Cys44/Cys60, Cys59/Cys111, Cys65/Cys138, Cys66/Cys104, Cys73/Cys97, and Cys91/Cys102. Positions 43, 45, and 47 each coordinate Ca(2+). Residue His63 is part of the active site. Residue Asp64 participates in Ca(2+) binding. Asp105 is a catalytic residue.

In terms of assembly, monomer. Requires Ca(2+) as cofactor. Expressed by the venom gland.

It is found in the secreted. The catalysed reaction is a 1,2-diacyl-sn-glycero-3-phosphocholine + H2O = a 1-acyl-sn-glycero-3-phosphocholine + a fatty acid + H(+). Snake venom phospholipase A2 (PLA2) that shows myotoxic activities. PLA2 catalyzes the calcium-dependent hydrolysis of the 2-acyl groups in 3-sn-phosphoglycerides. The protein is Basic phospholipase A2 Cll-N6 of Crotalus lepidus lepidus (Mottled rock rattlesnake).